The following is a 415-amino-acid chain: Exodeoxyribonuclease 7 large subunit (415 aa).

Belongs to the XseA family. In terms of assembly, heterooligomer composed of large and small subunits.

It is found in the cytoplasm. It catalyses the reaction Exonucleolytic cleavage in either 5'- to 3'- or 3'- to 5'-direction to yield nucleoside 5'-phosphates.. Functionally, bidirectionally degrades single-stranded DNA into large acid-insoluble oligonucleotides, which are then degraded further into small acid-soluble oligonucleotides. In Mycobacterium bovis (strain ATCC BAA-935 / AF2122/97), this protein is Exodeoxyribonuclease 7 large subunit.